A 146-amino-acid chain; its full sequence is Cystatin-C (146 aa).

The N-terminal stretch at 1 to 26 is a signal peptide; it reads MAGPLRAPLLLLAILAVALAVSPAAG. A Phosphoserine; by FAM20C modification is found at serine 43. The Secondary area of contact signature appears at 81–85; the sequence is QIVAG. 2 disulfide bridges follow: cysteine 99-cysteine 109 and cysteine 123-cysteine 143.

It belongs to the cystatin family. As to quaternary structure, homodimer. In terms of processing, the Thr-25 variant is O-glycosylated with a core 1 or possibly core 8 glycan. The signal peptide of the O-glycosylated Thr-25 variant is cleaved between Ala-20 and Val-21. In terms of tissue distribution, expressed in submandibular and sublingual saliva but not in parotid saliva (at protein level). Expressed in various body fluids, such as the cerebrospinal fluid and plasma. Expressed in highest levels in the epididymis, vas deferens, brain, thymus, and ovary and the lowest in the submandibular gland.

Its subcellular location is the secreted. As an inhibitor of cysteine proteinases, this protein is thought to serve an important physiological role as a local regulator of this enzyme activity. This Homo sapiens (Human) protein is Cystatin-C (CST3).